The primary structure comprises 290 residues: Hydroxyacylglutathione hydrolase-like protein (290 aa).

Zn(2+) contacts are provided by histidine 54, histidine 56, aspartate 58, histidine 59, histidine 110, aspartate 134, and histidine 172.

It belongs to the metallo-beta-lactamase superfamily. Glyoxalase II family. Requires Zn(2+) as cofactor.

Its function is as follows. Hydrolase acting on ester bonds. This chain is Hydroxyacylglutathione hydrolase-like protein (HAGHL), found in Homo sapiens (Human).